We begin with the raw amino-acid sequence, 256 residues long: Probable elongation factor 1-delta (256 aa).

Phosphoserine is present on residues serine 37, serine 53, and serine 89. Positions asparagine 110–alanine 146 are disordered. A compositionally biased stretch (basic and acidic residues) spans lysine 114 to alanine 125. The span at asparagine 126–glycine 144 shows a compositional bias: acidic residues. Phosphoserine occurs at positions 137 and 139.

This sequence belongs to the EF-1-beta/EF-1-delta family. In terms of assembly, EF-1 is composed of 4 subunits: alpha, beta, delta, and gamma.

In terms of biological role, EF-1-beta and EF-1-delta stimulate the exchange of GDP bound to EF-1-alpha to GTP. The polypeptide is Probable elongation factor 1-delta (eEF1delta) (Drosophila melanogaster (Fruit fly)).